Consider the following 463-residue polypeptide: Putative glycine--tRNA ligase, cytoplasmic (463 aa).

Residues 25-54 (TLEDSHAAKPETNAAIELPNKSKPEKSAVE) are disordered. The segment covering 44–54 (NKSKPEKSAVE) has biased composition (basic and acidic residues). 2 residues coordinate substrate: R153 and E239. Residues 271–273 (RNE) and 281–286 (LRTREF) contribute to the ATP site. Residues 286–290 (FTLAE) and N376 contribute to the substrate site. 398 to 399 (EC) is a binding site for ATP.

It belongs to the class-II aminoacyl-tRNA synthetase family. Homodimer.

The protein resides in the cytoplasm. The enzyme catalyses tRNA(Gly) + glycine + ATP = glycyl-tRNA(Gly) + AMP + diphosphate. Its function is as follows. Catalyzes the attachment of glycine to tRNA(Gly). Is also able produce diadenosine tetraphosphate (Ap4A), a universal pleiotropic signaling molecule needed for cell regulation pathways, by direct condensation of 2 ATPs. This chain is Putative glycine--tRNA ligase, cytoplasmic, found in Arabidopsis thaliana (Mouse-ear cress).